A 683-amino-acid chain; its full sequence is MSPTEMISQENYEPGICKIDPWLKPFAPAIKRRLESYKKWVKEINQNEGGYDKFSRGYERFGLNVLPNGDIIYREWAPNAVAASLIGEFNDWDRSKHPMKKDSFGVWEVHIPAKNGIPTIPHNTKIKISMTTPEGECIDRLPAWIKRVTQDLNVSLAYDAIFWNPPQKYQWKNNSPKKPTSLRIYEAHVGISTNEGRVGTYNEFTDNVLKRIKDLGYNAIQLMAIMEHAYYASFGYQVTSFFGVSSRYGTPEELMRLIDTAHGMGLYVLLDVVHSHACKNVLDGLNMFDGSDHCYFHEGGKGRHDLWDSRLFNYGHWEVLRFLLSNLRFFMEEYRFDGFRFDGVTSMMYHHHGIGTGFSGGYHEYFGDTVDEGGVVYLMLANDMLHKLYPRIITVSEDVSGMPGLCLPVEEGGIGFDYRLAMAIPDMWIKLLKEQRDDDWDMGNICWTLTNRRHMEKTIAYAESHDQALVGDKTLAFWLMDKEMYTHMSDMTPLTPIIDRGLALHKMIRLLTHGLGGEGYLNFEGNEFGHPEWLDFPRAGNNNSFHYARRQWNVVDDDLLRYKYLNEFDKAMQHLEEQYGWLSSPQAYISLKHNENKLVAFERGNLLWIFNFHPTQSFADYKIGTEWAGKYSIALNTDRKIFGGHDRIDESISYHSQPHEWDGRKNYIQVYIPCRVALVLSHC.

2 residues coordinate (1,4-alpha-D-glucosyl)n: W92 and K127. D342 functions as the Nucleophile in the catalytic mechanism. Residue E397 is the Proton donor of the active site.

Belongs to the glycosyl hydrolase 13 family. GlgB subfamily.

It is found in the cytoplasm. It carries out the reaction Transfers a segment of a (1-&gt;4)-alpha-D-glucan chain to a primary hydroxy group in a similar glucan chain.. It participates in glycan biosynthesis; glycogen biosynthesis. Glycogen-branching enzyme participates in the glycogen biosynthetic process along with glycogenin and glycogen synthase. Generates alpha-1,6-glucosidic branches from alpha-1,4-linked glucose chains, to increase solubility of the glycogen polymer. The polypeptide is 1,4-alpha-glucan-branching enzyme (GLC3) (Rhizophagus irregularis (strain DAOM 181602 / DAOM 197198 / MUCL 43194) (Arbuscular mycorrhizal fungus)).